A 764-amino-acid chain; its full sequence is Probable cyclic nucleotide-gated ion channel 20, chloroplastic (764 aa).

A chloroplast-targeting transit peptide spans 1 to 25 (MASHNENDDIPMLPISDPSSRTRAR). Residues 1–40 (MASHNENDDIPMLPISDPSSRTRARAFTSRSRSVSLSNPT) form a disordered region. A compositionally biased stretch (low complexity) spans 19–33 (SSRTRARAFTSRSRS). The Stromal segment spans residues 26–204 (AFTSRSRSVS…PHAKEVQTWT (179 aa)). The helical transmembrane segment at 205 to 225 (KFFALSCLLAIFIDPLFFFLI) threads the bilayer. At 226-242 (KVQEQNKCIMIDWPMTK) the chain is on the lumenal side. Residues 243 to 263 (AFVAVRSVTDVIFTMNILLQF) traverse the membrane as a helical segment. Topologically, residues 264 to 295 (RLAYVARESTVVGAGQLVSHPKKIALHYLKGK) are stromal. The helical transmembrane segment at 296-316 (FFLDLFIVMPLPQILILWIIP) threads the bilayer. At 317 to 329 (AHLGASGANYAKN) the chain is on the lumenal side. The chain crosses the membrane as a helical span at residues 330 to 350 (LLRAAVLFQYIPKLYRLLPFL). The Stromal segment spans residues 351 to 366 (AGQTPTGFIFESAWAN). Residues 367–387 (FVINLLTFMLAGHVVGSCWYL) form a helical membrane-spanning segment. Over 388-488 (FGLQRVNQCL…GNQVPSYFLG (101 aa)) the chain is Lumenal. The chain crosses the membrane as a helical span at residues 489–509 (EVFFTMGIIGLGLLLFALLIG). Over 510–764 (NMQNFLQALG…LCTPQSSYSL (255 aa)) the chain is Stromal. A nucleoside 3',5'-cyclic phosphate contacts are provided by residues 593–710 (IFSL…EDVT) and glutamate 658. The tract at residues 713–729 (FSRFLRSHRVQGAIRYD) is calmodulin-binding. Residues 734-763 (RLRAARQIQVAWRYRRRRLHRLCTPQSSYS) form the IQ domain.

It belongs to the cyclic nucleotide-gated cation channel (TC 1.A.1.5) family. Homotetramer or heterotetramer.

The protein localises to the plastid. It localises to the chloroplast thylakoid membrane. Its function is as follows. Probable cyclic nucleotide-gated ion channel. This Arabidopsis thaliana (Mouse-ear cress) protein is Probable cyclic nucleotide-gated ion channel 20, chloroplastic (CNGC20).